Consider the following 151-residue polypeptide: SsrA-binding protein (151 aa).

The protein belongs to the SmpB family.

It is found in the cytoplasm. Functionally, required for rescue of stalled ribosomes mediated by trans-translation. Binds to transfer-messenger RNA (tmRNA), required for stable association of tmRNA with ribosomes. tmRNA and SmpB together mimic tRNA shape, replacing the anticodon stem-loop with SmpB. tmRNA is encoded by the ssrA gene; the 2 termini fold to resemble tRNA(Ala) and it encodes a 'tag peptide', a short internal open reading frame. During trans-translation Ala-aminoacylated tmRNA acts like a tRNA, entering the A-site of stalled ribosomes, displacing the stalled mRNA. The ribosome then switches to translate the ORF on the tmRNA; the nascent peptide is terminated with the 'tag peptide' encoded by the tmRNA and targeted for degradation. The ribosome is freed to recommence translation, which seems to be the essential function of trans-translation. The sequence is that of SsrA-binding protein from Chlamydia muridarum (strain MoPn / Nigg).